The primary structure comprises 234 residues: Ribonuclease 3 (234 aa).

The 130-residue stretch at 4–133 folds into the RNase III domain; sequence LLDLEHKLNY…ILGAVYIDSN (130 aa). A Mg(2+)-binding site is contributed by Glu-46. Residue Asp-50 is part of the active site. 2 residues coordinate Mg(2+): Asp-119 and Glu-122. The active site involves Glu-122. One can recognise a DRBM domain in the interval 160 to 228; that stretch reads DFKSILQEYV…AKALCIKLGV (69 aa).

Belongs to the ribonuclease III family. As to quaternary structure, homodimer. Mg(2+) serves as cofactor.

It localises to the cytoplasm. It catalyses the reaction Endonucleolytic cleavage to 5'-phosphomonoester.. Functionally, digests double-stranded RNA. Involved in the processing of primary rRNA transcript to yield the immediate precursors to the large and small rRNAs (23S and 16S). Processes some mRNAs, and tRNAs when they are encoded in the rRNA operon. Processes pre-crRNA and tracrRNA of type II CRISPR loci if present in the organism. In Fusobacterium nucleatum subsp. nucleatum (strain ATCC 25586 / DSM 15643 / BCRC 10681 / CIP 101130 / JCM 8532 / KCTC 2640 / LMG 13131 / VPI 4355), this protein is Ribonuclease 3.